Consider the following 302-residue polypeptide: Uricase (302 aa).

Catalysis depends on charge relay system residues Lys22 and Thr67. The urate site is built by Thr67, Asp68, Phe163, Arg180, Gln223, and Asn249. His251 serves as the catalytic Charge relay system.

It belongs to the uricase family. In terms of assembly, homotetramer.

The enzyme catalyses urate + O2 + H2O = 5-hydroxyisourate + H2O2. The protein operates within purine metabolism; urate degradation; (S)-allantoin from urate: step 1/3. Its function is as follows. Catalyzes the oxidation of uric acid to 5-hydroxyisourate, which is further processed to form (S)-allantoin. This chain is Uricase (uox), found in Arthrobacter globiformis.